The following is a 252-amino-acid chain: Uridylate kinase (252 aa).

An ATP-binding site is contributed by 20–23; it reads KLSG. The tract at residues 28 to 33 is involved in allosteric activation by GTP; it reads GGGGLG. Residue G62 coordinates UMP. ATP is bound by residues G63 and R67. UMP contacts are provided by residues D82 and 143 to 150; that span reads MGMPYFST. The ATP site is built by N171, Y177, and D180.

The protein belongs to the UMP kinase family. In terms of assembly, homohexamer.

The protein localises to the cytoplasm. It carries out the reaction UMP + ATP = UDP + ADP. It functions in the pathway pyrimidine metabolism; CTP biosynthesis via de novo pathway; UDP from UMP (UMPK route): step 1/1. Its activity is regulated as follows. Allosterically activated by GTP. Inhibited by UTP. In terms of biological role, catalyzes the reversible phosphorylation of UMP to UDP. In Streptomyces avermitilis (strain ATCC 31267 / DSM 46492 / JCM 5070 / NBRC 14893 / NCIMB 12804 / NRRL 8165 / MA-4680), this protein is Uridylate kinase.